Reading from the N-terminus, the 339-residue chain is Serine/threonine-protein kinase SAPK2 (339 aa).

The Protein kinase domain occupies 4-260; the sequence is YEVIKDIGSG…IPEIKNHPWF (257 aa). Residues 10–18 and Lys-33 each bind ATP; that span reads IGSGNFGVA. The Proton acceptor role is filled by Asp-123. The segment at 253–339 is C-terminal; it reads EIKNHPWFLK…EDSGDFVCAL (87 aa).

Belongs to the protein kinase superfamily. Ser/Thr protein kinase family. In terms of assembly, interacts with BZIP46. Interacts with ABI5 and PP2C30. Interacts with PP2C51. Phosphorylated. Expressed in leaf blades, leaf sheaths and roots. Expressed in shoots and roots of young seedlings.

The protein localises to the cytoplasm. It is found in the nucleus. It catalyses the reaction L-seryl-[protein] + ATP = O-phospho-L-seryl-[protein] + ADP + H(+). The enzyme catalyses L-threonyl-[protein] + ATP = O-phospho-L-threonyl-[protein] + ADP + H(+). With respect to regulation, activated by phosphorylation in response to hyperosmotic stress within 5 minutes. Functionally, may play a role in signal transduction of hyperosmotic response. Can phosphorylate BZIP46 in vitro. Together with ABI5, PP2C30 and PYL5, is part of an abscisic acid (ABA) signaling unit that modulates seed germination and early seedling growth. In Oryza sativa subsp. japonica (Rice), this protein is Serine/threonine-protein kinase SAPK2 (SAPK2).